The sequence spans 505 residues: Acetylcholine receptor subunit beta (505 aa).

Positions 1–24 (MTPGALLLLLLGVLGAHLAPGARG) are cleaved as a signal peptide. The Extracellular portion of the chain corresponds to 25-245 (SEAEGRLREK…VTFYLIIRRK (221 aa)). Cysteine 152 and cysteine 166 are disulfide-bonded. Asparagine 165 carries an N-linked (GlcNAc...) asparagine glycan. 3 helical membrane passes run 246 to 270 (PLFY…VFYL), 278 to 295 (MGLS…LLLL), and 312 to 333 (YLMF…VLNL). The Cytoplasmic portion of the chain corresponds to 334–473 (HHRSPHTHQM…WQFVAMVVDR (140 aa)). The tract at residues 365–391 (KPERDQMQEPPSIAPRDSPGSGWGRGT) is disordered. Tyrosine 394 carries the phosphotyrosine; by Tyr-kinases modification. The chain crosses the membrane as a helical span at residues 474–492 (LFLWTFIIFTSVGTLVIFL).

The protein belongs to the ligand-gated ion channel (TC 1.A.9) family. Acetylcholine receptor (TC 1.A.9.1) subfamily. Beta-1/CHRNB1 sub-subfamily. In terms of assembly, pentamer of two alpha chains, and one each of the beta, delta, and gamma (in immature muscle) or epsilon (in mature muscle) chains. The muscle heteropentamer composed of alpha-1, beta-1, delta, epsilon subunits interacts with the alpha-conotoxin ImII.

Its subcellular location is the postsynaptic cell membrane. The protein resides in the cell membrane. It catalyses the reaction K(+)(in) = K(+)(out). The enzyme catalyses Na(+)(in) = Na(+)(out). Its function is as follows. After binding acetylcholine, the AChR responds by an extensive change in conformation that affects all subunits and leads to opening of an ion-conducting channel across the plasma membrane. The chain is Acetylcholine receptor subunit beta (CHRNB1) from Bos taurus (Bovine).